A 345-amino-acid chain; its full sequence is D-apiose dehydrogenase (345 aa).

15–16 (FF) lines the NAD(+) pocket. Tryptophan 24, lysine 25, valine 27, and alanine 30 together coordinate Mg(2+). Residues aspartate 37, serine 79, 97-98 (QK), asparagine 126, and 165-167 (QPY) each bind NAD(+). Lysine 98 lines the substrate pocket. Substrate contacts are provided by glutamine 165, aspartate 178, histidine 182, and tyrosine 232.

It belongs to the Gfo/Idh/MocA family.

The enzyme catalyses D-apiofuranose + NAD(+) = D-apionolactone + NADH + H(+). It functions in the pathway carbohydrate metabolism. Its function is as follows. Involved in catabolism of D-apiose. Catalyzes oxidation of D-apiose to D-apionolactone. This Rhizobium rhizogenes (strain K84 / ATCC BAA-868) (Agrobacterium radiobacter) protein is D-apiose dehydrogenase.